The following is a 336-amino-acid chain: Homoserine O-acetyltransferase (336 aa).

The AB hydrolase-1 domain maps to 58 to 321 (AILVLHALTG…PHGHDAFLID (264 aa)). Ser-147 acts as the Nucleophile in catalysis. Arg-204 lines the substrate pocket. Catalysis depends on residues Asp-286 and His-315. Position 316 (Asp-316) interacts with substrate.

The protein belongs to the AB hydrolase superfamily. MetX family. As to quaternary structure, homodimer.

Its subcellular location is the cytoplasm. It carries out the reaction L-homoserine + acetyl-CoA = O-acetyl-L-homoserine + CoA. Its pathway is amino-acid biosynthesis; L-methionine biosynthesis via de novo pathway; O-acetyl-L-homoserine from L-homoserine: step 1/1. Functionally, transfers an acetyl group from acetyl-CoA to L-homoserine, forming acetyl-L-homoserine. This is Homoserine O-acetyltransferase from Deinococcus geothermalis (strain DSM 11300 / CIP 105573 / AG-3a).